The primary structure comprises 503 residues: Probable cytosol aminopeptidase (503 aa).

The Mn(2+) site is built by K268 and D273. K280 is an active-site residue. Mn(2+)-binding residues include D291, D350, and E352. The active site involves R354.

This sequence belongs to the peptidase M17 family. Mn(2+) is required as a cofactor.

The protein localises to the cytoplasm. It catalyses the reaction Release of an N-terminal amino acid, Xaa-|-Yaa-, in which Xaa is preferably Leu, but may be other amino acids including Pro although not Arg or Lys, and Yaa may be Pro. Amino acid amides and methyl esters are also readily hydrolyzed, but rates on arylamides are exceedingly low.. The catalysed reaction is Release of an N-terminal amino acid, preferentially leucine, but not glutamic or aspartic acids.. In terms of biological role, presumably involved in the processing and regular turnover of intracellular proteins. Catalyzes the removal of unsubstituted N-terminal amino acids from various peptides. This Corynebacterium efficiens (strain DSM 44549 / YS-314 / AJ 12310 / JCM 11189 / NBRC 100395) protein is Probable cytosol aminopeptidase.